The sequence spans 1285 residues: Transmembrane channel-like protein 1 (1285 aa).

Residues 1-29 (MQEAARRASLRKEHTPTNEKFGDLSKQDS) are disordered. At 1–164 (MQEAARRASL…KIKRIESHFG (164 aa)) the chain is on the cytoplasmic side. Residues 165–202 (SVVSSYFTFLRWIVFVNIMITLIALVFVVLPETLADSV) traverse the membrane as a helical segment. Topologically, residues 203-260 (ANEGRFNRTKTRKQIPANERVHADELAVVWHYDGYLRYSPLFYGYYSDDPFLGNKIKY) are extracellular. An N-linked (GalNAc...) asparagine glycan is attached at asparagine 209. Residues 261-292 (ALPLAYFMVTLTIFAYSFFAILRKMAANARMS) traverse the membrane as a helical segment. The Cytoplasmic portion of the chain corresponds to 293–349 (KLSGSKAEQYIFNWKLFTGWDYTIGNSETASNTVMAVVIKLRESIADIKKDAHGKFR). Residues 350-381 (LLQFSLRVFANIIICAMLGFSIYCIIFAVQKS) traverse the membrane as a helical segment. The Extracellular portion of the chain corresponds to 382 to 388 (QVQDDGN). A helical membrane pass occupies residues 389-416 (LFTKNQVPSVVSTITHVFPMIFDLIGKM). Residues 417–420 (ENYH) are Cytoplasmic-facing. A helical transmembrane segment spans residues 421–455 (PRTALRAHLGRVLILYTVNYITLIFALFEKMTALR). At 456–667 (DRVNSTSTSS…NHDGHNNDIC (212 aa)) the chain is on the extracellular side. The interval 458-488 (VNSTSTSSSHRTKRQQGGWNPNMQRPPPYAS) is disordered. Cysteine 667 and cysteine 816 are disulfide-bonded. A helical transmembrane segment spans residues 668–705 (WETIIGQEIVKLVTMDLIFTILSILVIDLFRGLWIKYC). Positions 696–720 (LFRGLWIKYCSSWWCWDIETTFPEY) are required for interaction with tmie. Over 706–724 (SSWWCWDIETTFPEYGEFK) the chain is Cytoplasmic. A helical membrane pass occupies residues 725–745 (VAENVLHIINNQGMIWLGLFF). Residues 746 to 748 (APL) lie on the Extracellular side of the membrane. The helical transmembrane segment at 749–771 (LPAINNIKLIILMYIRGWAVMTC) threads the bilayer. Positions 766–773 (WAVMTCNV) are required for interaction with tmie. Topologically, residues 772–785 (NVPAREIFRASRSS) are cytoplasmic. Residues 786 to 809 (NFYLGILLIWLLLCTLPVGFVIAS) traverse the membrane as a helical segment. Topologically, residues 810 to 852 (MSPSRSCGPFARYQHFYTVVTREIEKRVDQTVLSYIRHIASPG) are extracellular. A helical membrane pass occupies residues 853–886 (VVIPIILFLILIIYFLFSLVRGLREANTDLQAQL). The Cytoplasmic segment spans residues 887–1285 (VHERTEEKKK…DEDDSPRQID (399 aa)). Disordered stretches follow at residues 940-962 (ADHA…DDER) and 1114-1285 (TIKE…RQID). The span at 948-961 (SSEESDINEDEDDE) shows a compositional bias: acidic residues. Composition is skewed to basic and acidic residues over residues 1121–1131 (DPGKSDKKQTS), 1146–1156 (DEARALREKMK), and 1167–1182 (TVEE…ESEF). Positions 1197-1208 (TEEENEEEETDS) are enriched in acidic residues.

Belongs to the TMC family. In terms of assembly, homodimer. Interacts with calm-1 and tmie to form the MET channel. In terms of tissue distribution, expressed in the ASH polymodal avoidance neurons. Also expressed in other sensory neurons, including the ADF, ASE, ADL, AQR, PQR, URX and PHA cells.

The protein localises to the cell membrane. It catalyses the reaction Na(+)(in) = Na(+)(out). It carries out the reaction Ca(2+)(in) = Ca(2+)(out). The enzyme catalyses K(+)(in) = K(+)(out). In terms of biological role, pore-forming subunit of the mechanotransducer (MET) non-selective cation channel complex. The MET complex is composed of symmetric dimeric MET channels, each channel comprising two copies of pore-forming ion-conducting transmembrane TMC subunits and auxiliary proteins including the transmembrane inner ear protein/tmie, the calcium-binding protein/calm-1 and arrestin domain protein arrd-6. Sodium ions are the most permeable, whereas calcium and potassium have lower indices. Sodium-sensor ion channel that acts specifically in salt taste chemosensation. Required for salt-evoked neuronal activity and behavioral avoidance of high concentrations of NaCl. The sequence is that of Transmembrane channel-like protein 1 (tmc-1) from Caenorhabditis elegans.